The following is a 278-amino-acid chain: Methyltransferase GfsG (278 aa).

Residues glutamine 105 and 128-129 (DA) contribute to the S-adenosyl-L-methionine site. Glutamate 146 (proton acceptor) is an active-site residue. Histidine 150 lines the S-adenosyl-L-methionine pocket.

It belongs to the methyltransferase superfamily.

It functions in the pathway antibiotic biosynthesis. Methylase required for synthesis of the 16-membered macrolide antibiotics FD-891 and FD-892. In vitro uses S-adenosyl-L-methionine to methylate a number of biosynthetic intermediates in the synthesis of FD-891. This chain is Methyltransferase GfsG, found in Streptomyces halstedii.